The sequence spans 192 residues: UPF0149 protein VP2588 (192 aa).

The protein belongs to the UPF0149 family.

The sequence is that of UPF0149 protein VP2588 from Vibrio parahaemolyticus serotype O3:K6 (strain RIMD 2210633).